Consider the following 254-residue polypeptide: Flavin-dependent thymidylate synthase (254 aa).

One can recognise a ThyX domain in the interval 7-237 (LRVQLIARTE…PAVFADFEIY (231 aa)). FAD contacts are provided by residues S71, 95-97 (RHR), and Q103. DUMP-binding positions include 92-95 (ELIR), 103-107 (QLSQR), and R176. The short motif at 95 to 105 (RHRHFSYSQLS) is the ThyX motif element. FAD contacts are provided by residues 192-194 (NYR) and H198. R203 serves as a coordination point for dUMP. Residue R203 is the Involved in ionization of N3 of dUMP, leading to its activation of the active site.

This sequence belongs to the thymidylate synthase ThyX family. Homotetramer. It depends on FAD as a cofactor.

It catalyses the reaction dUMP + (6R)-5,10-methylene-5,6,7,8-tetrahydrofolate + NADPH + H(+) = dTMP + (6S)-5,6,7,8-tetrahydrofolate + NADP(+). Its pathway is pyrimidine metabolism; dTTP biosynthesis. In terms of biological role, catalyzes the reductive methylation of 2'-deoxyuridine-5'-monophosphate (dUMP) to 2'-deoxythymidine-5'-monophosphate (dTMP) while utilizing 5,10-methylenetetrahydrofolate (mTHF) as the methyl donor, and NADPH and FADH(2) as the reductant. In Mycobacterium sp. (strain KMS), this protein is Flavin-dependent thymidylate synthase.